The chain runs to 153 residues: Actin-related protein 2/3 complex subunit 5-like protein (153 aa).

Ser-64 is modified (phosphoserine).

It belongs to the ARPC5 family. As to quaternary structure, may be a component of the Arp2/3 complex in which it may replace ARPC5.

It localises to the cytoplasm. The protein localises to the cytoskeleton. Functionally, may function as component of the Arp2/3 complex which is involved in regulation of actin polymerization and together with an activating nucleation-promoting factor (NPF) mediates the formation of branched actin networks. The sequence is that of Actin-related protein 2/3 complex subunit 5-like protein (Arpc5l) from Mus musculus (Mouse).